The following is a 236-amino-acid chain: Leucyl/phenylalanyl-tRNA--protein transferase (236 aa).

It belongs to the L/F-transferase family.

The protein resides in the cytoplasm. It carries out the reaction N-terminal L-lysyl-[protein] + L-leucyl-tRNA(Leu) = N-terminal L-leucyl-L-lysyl-[protein] + tRNA(Leu) + H(+). The enzyme catalyses N-terminal L-arginyl-[protein] + L-leucyl-tRNA(Leu) = N-terminal L-leucyl-L-arginyl-[protein] + tRNA(Leu) + H(+). The catalysed reaction is L-phenylalanyl-tRNA(Phe) + an N-terminal L-alpha-aminoacyl-[protein] = an N-terminal L-phenylalanyl-L-alpha-aminoacyl-[protein] + tRNA(Phe). Functionally, functions in the N-end rule pathway of protein degradation where it conjugates Leu, Phe and, less efficiently, Met from aminoacyl-tRNAs to the N-termini of proteins containing an N-terminal arginine or lysine. The polypeptide is Leucyl/phenylalanyl-tRNA--protein transferase (Shewanella sp. (strain MR-4)).